We begin with the raw amino-acid sequence, 101 residues long: Small ribosomal subunit protein uS14 (101 aa).

The tract at residues 1-24 is disordered; the sequence is MAKVSSIKKNEKRKKLSQSLHNKR. Positions 10–24 are enriched in basic residues; that stretch reads NEKRKKLSQSLHNKR.

Belongs to the universal ribosomal protein uS14 family. As to quaternary structure, part of the 30S ribosomal subunit. Contacts proteins S3 and S10.

In terms of biological role, binds 16S rRNA, required for the assembly of 30S particles and may also be responsible for determining the conformation of the 16S rRNA at the A site. This Rickettsia bellii (strain OSU 85-389) protein is Small ribosomal subunit protein uS14.